Here is a 308-residue protein sequence, read N- to C-terminus: Tetraacyldisaccharide 4'-kinase (308 aa).

Residue Ser63–Thr70 participates in ATP binding.

Belongs to the LpxK family.

The enzyme catalyses a lipid A disaccharide + ATP = a lipid IVA + ADP + H(+). Its pathway is glycolipid biosynthesis; lipid IV(A) biosynthesis; lipid IV(A) from (3R)-3-hydroxytetradecanoyl-[acyl-carrier-protein] and UDP-N-acetyl-alpha-D-glucosamine: step 6/6. Transfers the gamma-phosphate of ATP to the 4'-position of a tetraacyldisaccharide 1-phosphate intermediate (termed DS-1-P) to form tetraacyldisaccharide 1,4'-bis-phosphate (lipid IVA). This chain is Tetraacyldisaccharide 4'-kinase, found in Campylobacter jejuni subsp. jejuni serotype O:2 (strain ATCC 700819 / NCTC 11168).